Here is a 224-residue protein sequence, read N- to C-terminus: Imidazoleglycerol-phosphate dehydratase (224 aa).

The protein belongs to the imidazoleglycerol-phosphate dehydratase family.

The enzyme catalyses D-erythro-1-(imidazol-4-yl)glycerol 3-phosphate = 3-(imidazol-4-yl)-2-oxopropyl phosphate + H2O. It participates in amino-acid biosynthesis; L-histidine biosynthesis; L-histidine from 5-phospho-alpha-D-ribose 1-diphosphate: step 6/9. This is Imidazoleglycerol-phosphate dehydratase (HIS3) from Cyberlindnera jadinii (Torula yeast).